The following is a 635-amino-acid chain: Threonine--tRNA ligase (635 aa).

Residues 1–61 (MITVRLPDGS…EKDSDLAIIT (61 aa)) enclose the TGS domain. The interval 242–533 (DHRKLGKQLD…LIEHYAGALP (292 aa)) is catalytic. Residues cysteine 333, histidine 384, and histidine 510 each coordinate Zn(2+).

It belongs to the class-II aminoacyl-tRNA synthetase family. Homodimer. Zn(2+) serves as cofactor.

Its subcellular location is the cytoplasm. The enzyme catalyses tRNA(Thr) + L-threonine + ATP = L-threonyl-tRNA(Thr) + AMP + diphosphate + H(+). In terms of biological role, catalyzes the attachment of threonine to tRNA(Thr) in a two-step reaction: L-threonine is first activated by ATP to form Thr-AMP and then transferred to the acceptor end of tRNA(Thr). Also edits incorrectly charged L-seryl-tRNA(Thr). The polypeptide is Threonine--tRNA ligase (Janthinobacterium sp. (strain Marseille) (Minibacterium massiliensis)).